The following is a 198-amino-acid chain: Small ribosomal subunit protein eS1 (198 aa).

It belongs to the eukaryotic ribosomal protein eS1 family.

The sequence is that of Small ribosomal subunit protein eS1 from Nanoarchaeum equitans (strain Kin4-M).